Reading from the N-terminus, the 417-residue chain is Serine--tRNA ligase (417 aa).

232–234 contributes to the L-serine binding site; sequence TSE. 263 to 265 is an ATP binding site; that stretch reads RKE. L-serine is bound at residue E286. Residue 350–353 coordinates ATP; sequence EISS. S385 contributes to the L-serine binding site.

The protein belongs to the class-II aminoacyl-tRNA synthetase family. Type-1 seryl-tRNA synthetase subfamily. As to quaternary structure, homodimer. The tRNA molecule binds across the dimer.

The protein localises to the cytoplasm. The enzyme catalyses tRNA(Ser) + L-serine + ATP = L-seryl-tRNA(Ser) + AMP + diphosphate + H(+). It carries out the reaction tRNA(Sec) + L-serine + ATP = L-seryl-tRNA(Sec) + AMP + diphosphate + H(+). The protein operates within aminoacyl-tRNA biosynthesis; selenocysteinyl-tRNA(Sec) biosynthesis; L-seryl-tRNA(Sec) from L-serine and tRNA(Sec): step 1/1. In terms of biological role, catalyzes the attachment of serine to tRNA(Ser). Is also able to aminoacylate tRNA(Sec) with serine, to form the misacylated tRNA L-seryl-tRNA(Sec), which will be further converted into selenocysteinyl-tRNA(Sec). This chain is Serine--tRNA ligase, found in Campylobacter hominis (strain ATCC BAA-381 / DSM 21671 / CCUG 45161 / LMG 19568 / NCTC 13146 / CH001A).